The primary structure comprises 194 residues: Thymidine kinase (194 aa).

Residues 15–22 and 88–91 each bind ATP; these read GCMFSGKT and DELH. Glutamate 89 serves as the catalytic Proton acceptor. Zn(2+)-binding residues include cysteine 148, cysteine 151, cysteine 186, and cysteine 189.

This sequence belongs to the thymidine kinase family. Homotetramer.

The protein localises to the cytoplasm. The enzyme catalyses thymidine + ATP = dTMP + ADP + H(+). The protein is Thymidine kinase of Roseiflexus castenholzii (strain DSM 13941 / HLO8).